We begin with the raw amino-acid sequence, 177 residues long: Large ribosomal subunit protein uL6 (177 aa).

It belongs to the universal ribosomal protein uL6 family. As to quaternary structure, part of the 50S ribosomal subunit.

Its function is as follows. This protein binds to the 23S rRNA, and is important in its secondary structure. It is located near the subunit interface in the base of the L7/L12 stalk, and near the tRNA binding site of the peptidyltransferase center. This is Large ribosomal subunit protein uL6 from Cupriavidus pinatubonensis (strain JMP 134 / LMG 1197) (Cupriavidus necator (strain JMP 134)).